The following is a 344-amino-acid chain: Sulfate/thiosulfate import ATP-binding protein CysA (344 aa).

Residues 9-239 form the ABC transporter domain; sequence IQVSQVSKQF…PATPFVMSFI (231 aa). 41–48 contributes to the ATP binding site; that stretch reads GPSGSGKS.

This sequence belongs to the ABC transporter superfamily. Sulfate/tungstate importer (TC 3.A.1.6) family. As to quaternary structure, the complex is composed of two ATP-binding proteins (CysA), two transmembrane proteins (CysT and CysW) and a solute-binding protein (CysP).

It localises to the cell inner membrane. It carries out the reaction sulfate(out) + ATP + H2O = sulfate(in) + ADP + phosphate + H(+). The catalysed reaction is thiosulfate(out) + ATP + H2O = thiosulfate(in) + ADP + phosphate + H(+). In terms of biological role, part of the ABC transporter complex CysAWTP involved in sulfate/thiosulfate import. Responsible for energy coupling to the transport system. The sequence is that of Sulfate/thiosulfate import ATP-binding protein CysA from Synechococcus elongatus (strain ATCC 33912 / PCC 7942 / FACHB-805) (Anacystis nidulans R2).